Here is a 246-residue protein sequence, read N- to C-terminus: UDP-N-acetyl-D-mannosaminuronic acid transferase (246 aa).

The protein belongs to the glycosyltransferase 26 family.

The enzyme catalyses UDP-N-acetyl-alpha-D-mannosaminouronate + N-acetyl-alpha-D-glucosaminyl-di-trans,octa-cis-undecaprenyl diphosphate = beta-D-ManNAcA-(1-&gt;4)-alpha-D-GlcNAc-di-trans,octa-cis-undecaprenyl diphosphate + UDP + H(+). Its pathway is bacterial outer membrane biogenesis; enterobacterial common antigen biosynthesis. Catalyzes the synthesis of Und-PP-GlcNAc-ManNAcA (Lipid II), the second lipid-linked intermediate involved in enterobacterial common antigen (ECA) synthesis. The protein is UDP-N-acetyl-D-mannosaminuronic acid transferase of Salmonella schwarzengrund (strain CVM19633).